We begin with the raw amino-acid sequence, 366 residues long: GTP cyclohydrolase 1 type 2 homolog (366 aa).

Residues H64, H65, D102, H326, and E329 each coordinate Zn(2+).

It belongs to the GTP cyclohydrolase I type 2/NIF3 family. In terms of assembly, homohexamer.

This is GTP cyclohydrolase 1 type 2 homolog from Staphylococcus aureus (strain MSSA476).